A 234-amino-acid chain; its full sequence is (5-formylfuran-3-yl)methyl phosphate synthase (234 aa).

The Schiff-base intermediate with substrate role is filled by lysine 27. Lysine 85 acts as the Proton acceptor in catalysis.

This sequence belongs to the MfnB family.

It catalyses the reaction 2 D-glyceraldehyde 3-phosphate = 4-(hydroxymethyl)-2-furancarboxaldehyde phosphate + phosphate + 2 H2O. It functions in the pathway cofactor biosynthesis; methanofuran biosynthesis. In terms of biological role, catalyzes the formation of 4-(hydroxymethyl)-2-furancarboxaldehyde phosphate (4-HFC-P) from two molecules of glyceraldehyde-3-P (GA-3-P). The protein is (5-formylfuran-3-yl)methyl phosphate synthase of Methanosarcina mazei (strain ATCC BAA-159 / DSM 3647 / Goe1 / Go1 / JCM 11833 / OCM 88) (Methanosarcina frisia).